We begin with the raw amino-acid sequence, 39 residues long: Photosystem II reaction center protein Y (39 aa).

A helical membrane pass occupies residues Val-5 to Ile-23.

It belongs to the PsbY family. In terms of assembly, PSII is composed of 1 copy each of membrane proteins PsbA, PsbB, PsbC, PsbD, PsbE, PsbF, PsbH, PsbI, PsbJ, PsbK, PsbL, PsbM, PsbT, PsbX, PsbY, PsbZ, Psb30/Ycf12, peripheral proteins PsbO, CyanoQ (PsbQ), PsbU, PsbV and a large number of cofactors. It forms dimeric complexes.

The protein localises to the cellular thylakoid membrane. In terms of biological role, loosely associated component of the core of photosystem II (PSII), it is not always seen in crystals. PSII is a light-driven water plastoquinone oxidoreductase, using light energy to abstract electrons from H(2)O, generating a proton gradient subsequently used for ATP formation. This is Photosystem II reaction center protein Y from Rippkaea orientalis (strain PCC 8801 / RF-1) (Cyanothece sp. (strain PCC 8801)).